Consider the following 87-residue polypeptide: Protein moa-2 (87 aa).

Residues 23–87 (GTAMRHEPSR…VWTASREESS (65 aa)) are disordered. Basic and acidic residues-rich tracts occupy residues 26-39 (MRHEPSRMDCESAP) and 50-63 (RNEHVYCRCGEREP).

The chain is Protein moa-2 from Caenorhabditis elegans.